A 345-amino-acid polypeptide reads, in one-letter code: D-fructose 1,6-bisphosphatase class 2/sedoheptulose 1,7-bisphosphatase (345 aa).

Residues aspartate 33, glutamate 57, aspartate 97, and glutamate 100 each coordinate Mn(2+). Substrate is bound by residues 100-102 (EGT), tyrosine 131, 176-178 (RPR), and 198-200 (DGD). Glutamate 225 contacts Mn(2+).

The protein belongs to the FBPase class 2 family. Homotetramer. Mn(2+) serves as cofactor.

It catalyses the reaction beta-D-fructose 1,6-bisphosphate + H2O = beta-D-fructose 6-phosphate + phosphate. It carries out the reaction D-sedoheptulose 1,7-bisphosphate + H2O = D-sedoheptulose 7-phosphate + phosphate. The protein operates within carbohydrate biosynthesis; Calvin cycle. Its function is as follows. Catalyzes the hydrolysis of fructose 1,6-bisphosphate (Fru 1,6-P2) and sedoheptulose 1,7-bisphosphate (Sed 1,7-P2) to fructose 6-phosphate and sedoheptulose 7-phosphate, respectively. The polypeptide is D-fructose 1,6-bisphosphatase class 2/sedoheptulose 1,7-bisphosphatase (Crocosphaera subtropica (strain ATCC 51142 / BH68) (Cyanothece sp. (strain ATCC 51142))).